We begin with the raw amino-acid sequence, 131 residues long: Profilin-2 (131 aa).

Cys-13 and Cys-115 are joined by a disulfide. The Involved in PIP2 interaction signature appears at 81 to 97; that stretch reads AVIRGKKGPGGVTVKKT. Thr-111 carries the post-translational modification Phosphothreonine.

Belongs to the profilin family. In terms of assembly, multimer. Occurs in many kinds of cells as a complex with monomeric actin in a 1:1 ratio. Post-translationally, phosphorylated by MAP kinases.

The protein resides in the cytoplasm. It localises to the cytoskeleton. Functionally, binds to actin and affects the structure of the cytoskeleton. At high concentrations, profilin prevents the polymerization of actin, whereas it enhances it at low concentrations. By binding to PIP2, it inhibits the formation of IP3 and DG. The sequence is that of Profilin-2 from Hevea brasiliensis (Para rubber tree).